A 74-amino-acid chain; its full sequence is Anaphase-promoting complex subunit 13 (74 aa).

The disordered stretch occupies residues 33–53 (LNELPEPEQDNGGTTESVKEQ).

This sequence belongs to the APC13 family. As to quaternary structure, the mammalian APC/C is composed at least of 14 distinct subunits ANAPC1, ANAPC2, CDC27/APC3, ANAPC4, ANAPC5, CDC16/APC6, ANAPC7, CDC23/APC8, ANAPC10, ANAPC11, CDC26/APC12, ANAPC13, ANAPC15 and ANAPC16 that assemble into a complex of at least 19 chains with a combined molecular mass of around 1.2 MDa; APC/C interacts with FZR1 and FBXO5.

The protein localises to the nucleus. The protein operates within protein modification; protein ubiquitination. Its function is as follows. Component of the anaphase promoting complex/cyclosome (APC/C), a cell cycle-regulated E3 ubiquitin ligase that controls progression through mitosis and the G1 phase of the cell cycle. The APC/C complex acts by mediating ubiquitination and subsequent degradation of target proteins: it mainly mediates the formation of 'Lys-11'-linked polyubiquitin chains and, to a lower extent, the formation of 'Lys-48'- and 'Lys-63'-linked polyubiquitin chains. The APC/C complex catalyzes assembly of branched 'Lys-11'-/'Lys-48'-linked branched ubiquitin chains on target proteins. The sequence is that of Anaphase-promoting complex subunit 13 (ANAPC13) from Bos taurus (Bovine).